The following is a 263-amino-acid chain: tRNA (guanine-N(1)-)-methyltransferase (263 aa).

Residues Gly-113 and 137–142 (LGDYVL) each bind S-adenosyl-L-methionine.

The protein belongs to the RNA methyltransferase TrmD family. Homodimer.

Its subcellular location is the cytoplasm. The enzyme catalyses guanosine(37) in tRNA + S-adenosyl-L-methionine = N(1)-methylguanosine(37) in tRNA + S-adenosyl-L-homocysteine + H(+). Specifically methylates guanosine-37 in various tRNAs. This chain is tRNA (guanine-N(1)-)-methyltransferase, found in Renibacterium salmoninarum (strain ATCC 33209 / DSM 20767 / JCM 11484 / NBRC 15589 / NCIMB 2235).